A 409-amino-acid chain; its full sequence is 3-dehydro-bile acid delta(4,6)-reductase (409 aa).

Residues S12, E33, V131, E378, N390, and L391 each coordinate FAD.

It belongs to the BaiN/RdsA family. BaiN subfamily. Requires FAD as cofactor.

It carries out the reaction 3-oxocholan-24-oyl-CoA + NAD(+) = 3-oxochol-4-en-24-oyl-CoA + NADH + H(+). The enzyme catalyses 3-oxochol-4-en-24-oyl-CoA + NAD(+) = 3-oxochol-4,6-dien-24-oyl-CoA + NADH + H(+). The catalysed reaction is 12alpha-hydroxy-3-oxocholan-24-oyl-CoA + NAD(+) = 12alpha-hydroxy-3-oxochol-4-en-24-oyl-CoA + NADH + H(+). It catalyses the reaction 12alpha-hydroxy-3-oxochol-4-en-24-oyl-CoA + NAD(+) = 12alpha-hydroxy-3-oxochola-4,6-dien-24-oyl-CoA + NADH + H(+). Its pathway is lipid metabolism; bile acid degradation. Involved in the secondary bile acid metabolism. Catalyzes two subsequent reductions of the double bonds within the bile acid A/B rings of 3-oxochol-4,6-dien-24-oyl-CoA and 12alpha-hydroxy-3-oxochol-4,6-dien-24-oyl-CoA to yield 3-oxocholan-24-oyl-CoA and 12alpha-hydroxy-3-oxocholan-24-oyl-CoA, respectively. The polypeptide is 3-dehydro-bile acid delta(4,6)-reductase (Clostridium scindens (strain ATCC 35704 / DSM 5676 / VPI 13733 / 19)).